Here is a 70-residue protein sequence, read N- to C-terminus: Cytoinsectotoxin-2c (70 aa).

Belongs to the cationic peptide 06 (cytoinsectotoxin) family. Expressed by the venom gland.

Its subcellular location is the secreted. Functionally, insecticidal and antimicrobial peptide. Has insecticidal activity against larvae of flesh fly S.carnaria. Has antibacterial activity against Gram-positive bacterium B.subtilis B-501 (MIC=1.25 uM) and Gram-negative bacterium E.coli DH5alpha (MIC=2.5 uM). The chain is Cytoinsectotoxin-2c from Lachesana tarabaevi (Spider).